We begin with the raw amino-acid sequence, 444 residues long: Putative dipeptidase CPC735_015490 (444 aa).

Residues 1–34 (MSQRTEHNGSWLRNAGSLLSVLACVAVLASPASA) form the signal peptide. Positions 67, 69, and 178 each coordinate Zn(2+). The cysteines at positions 118 and 207 are disulfide-linked. Position 205 (His205) interacts with substrate. Zn(2+) contacts are provided by His250 and His271. The substrate site is built by Arg282 and Asp342. Asn413 is a glycosylation site (N-linked (GlcNAc...) asparagine).

It belongs to the metallo-dependent hydrolases superfamily. Peptidase M19 family. Zn(2+) is required as a cofactor.

It carries out the reaction an L-aminoacyl-L-amino acid + H2O = 2 an L-alpha-amino acid. Hydrolyzes a wide range of dipeptides. This Coccidioides posadasii (strain C735) (Valley fever fungus) protein is Putative dipeptidase CPC735_015490.